Here is a 448-residue protein sequence, read N- to C-terminus: Probable glycine dehydrogenase (decarboxylating) subunit 1 (448 aa).

Belongs to the GcvP family. N-terminal subunit subfamily. The glycine cleavage system is composed of four proteins: P, T, L and H. In this organism, the P 'protein' is a heterodimer of two subunits.

The catalysed reaction is N(6)-[(R)-lipoyl]-L-lysyl-[glycine-cleavage complex H protein] + glycine + H(+) = N(6)-[(R)-S(8)-aminomethyldihydrolipoyl]-L-lysyl-[glycine-cleavage complex H protein] + CO2. Functionally, the glycine cleavage system catalyzes the degradation of glycine. The P protein binds the alpha-amino group of glycine through its pyridoxal phosphate cofactor; CO(2) is released and the remaining methylamine moiety is then transferred to the lipoamide cofactor of the H protein. The protein is Probable glycine dehydrogenase (decarboxylating) subunit 1 of Staphylococcus aureus (strain USA300).